Reading from the N-terminus, the 577-residue chain is Aspartate--tRNA(Asp/Asn) ligase (577 aa).

Residue Glu171 participates in L-aspartate binding. The interval Gln195–Lys198 is aspartate. Residue Arg217 coordinates L-aspartate. Residues Arg217–Glu219 and Gln226 contribute to the ATP site. His444 is a binding site for L-aspartate. Position 474 (Glu474) interacts with ATP. Residue Arg481 participates in L-aspartate binding. An ATP-binding site is contributed by Gly526 to Arg529.

The protein belongs to the class-II aminoacyl-tRNA synthetase family. Type 1 subfamily. Homodimer.

It localises to the cytoplasm. The enzyme catalyses tRNA(Asx) + L-aspartate + ATP = L-aspartyl-tRNA(Asx) + AMP + diphosphate. In terms of biological role, aspartyl-tRNA synthetase with relaxed tRNA specificity since it is able to aspartylate not only its cognate tRNA(Asp) but also tRNA(Asn). Reaction proceeds in two steps: L-aspartate is first activated by ATP to form Asp-AMP and then transferred to the acceptor end of tRNA(Asp/Asn). This is Aspartate--tRNA(Asp/Asn) ligase from Helicobacter pylori (strain HPAG1).